Consider the following 334-residue polypeptide: Ketol-acid reductoisomerase (NADP(+)) (334 aa).

In terms of domain architecture, KARI N-terminal Rossmann spans 2-181 (TKVYYDQSVE…GATRAGVIET (180 aa)). NADP(+) is bound by residues 25–28 (YGSQ), arginine 48, serine 52, and 82–85 (DEIQ). Histidine 107 is an active-site residue. Residue glycine 133 participates in NADP(+) binding. In terms of domain architecture, KARI C-terminal knotted spans 182–327 (TFKEETETDL…RELRKMMPFI (146 aa)). Aspartate 190, glutamate 194, glutamate 226, and glutamate 230 together coordinate Mg(2+). Serine 251 is a substrate binding site.

It belongs to the ketol-acid reductoisomerase family. The cofactor is Mg(2+).

The catalysed reaction is (2R)-2,3-dihydroxy-3-methylbutanoate + NADP(+) = (2S)-2-acetolactate + NADPH + H(+). It carries out the reaction (2R,3R)-2,3-dihydroxy-3-methylpentanoate + NADP(+) = (S)-2-ethyl-2-hydroxy-3-oxobutanoate + NADPH + H(+). The protein operates within amino-acid biosynthesis; L-isoleucine biosynthesis; L-isoleucine from 2-oxobutanoate: step 2/4. Its pathway is amino-acid biosynthesis; L-valine biosynthesis; L-valine from pyruvate: step 2/4. In terms of biological role, involved in the biosynthesis of branched-chain amino acids (BCAA). Catalyzes an alkyl-migration followed by a ketol-acid reduction of (S)-2-acetolactate (S2AL) to yield (R)-2,3-dihydroxy-isovalerate. In the isomerase reaction, S2AL is rearranged via a Mg-dependent methyl migration to produce 3-hydroxy-3-methyl-2-ketobutyrate (HMKB). In the reductase reaction, this 2-ketoacid undergoes a metal-dependent reduction by NADPH to yield (R)-2,3-dihydroxy-isovalerate. The sequence is that of Ketol-acid reductoisomerase (NADP(+)) from Staphylococcus haemolyticus (strain JCSC1435).